The sequence spans 916 residues: Isoleucine--tRNA ligase (916 aa).

Residues 57–67 (PYANGNLHMGH) carry the 'HIGH' region motif. Glutamate 554 provides a ligand contact to L-isoleucyl-5'-AMP. Residues 595 to 599 (KMSKS) carry the 'KMSKS' region motif. Lysine 598 lines the ATP pocket. Cysteine 885, cysteine 888, cysteine 905, and cysteine 908 together coordinate Zn(2+).

It belongs to the class-I aminoacyl-tRNA synthetase family. IleS type 1 subfamily. As to quaternary structure, monomer. The cofactor is Zn(2+).

The protein localises to the cytoplasm. The enzyme catalyses tRNA(Ile) + L-isoleucine + ATP = L-isoleucyl-tRNA(Ile) + AMP + diphosphate. Functionally, catalyzes the attachment of isoleucine to tRNA(Ile). As IleRS can inadvertently accommodate and process structurally similar amino acids such as valine, to avoid such errors it has two additional distinct tRNA(Ile)-dependent editing activities. One activity is designated as 'pretransfer' editing and involves the hydrolysis of activated Val-AMP. The other activity is designated 'posttransfer' editing and involves deacylation of mischarged Val-tRNA(Ile). The chain is Isoleucine--tRNA ligase from Staphylococcus saprophyticus subsp. saprophyticus (strain ATCC 15305 / DSM 20229 / NCIMB 8711 / NCTC 7292 / S-41).